The following is a 483-amino-acid chain: Regulatory protein ViaA (483 aa).

The protein belongs to the ViaA family. In terms of assembly, homodimer. Interacts with RavA.

It localises to the cytoplasm. Its function is as follows. Component of the RavA-ViaA chaperone complex, which may act on the membrane to optimize the function of some of the respiratory chains. ViaA stimulates the ATPase activity of RavA. The sequence is that of Regulatory protein ViaA from Salmonella typhi.